Consider the following 82-residue polypeptide: Large ribosomal subunit protein uL23 (82 aa).

Belongs to the universal ribosomal protein uL23 family. Part of the 50S ribosomal subunit. Contacts protein L29.

Functionally, binds to 23S rRNA. One of the proteins that surrounds the polypeptide exit tunnel on the outside of the ribosome. The sequence is that of Large ribosomal subunit protein uL23 from Methanosarcina mazei (strain ATCC BAA-159 / DSM 3647 / Goe1 / Go1 / JCM 11833 / OCM 88) (Methanosarcina frisia).